The primary structure comprises 237 residues: D-aminoacyl-tRNA deacylase (237 aa).

Belongs to the DtdA deacylase family. As to quaternary structure, monomer. Requires Zn(2+) as cofactor.

The enzyme catalyses a D-aminoacyl-tRNA + H2O = a tRNA + a D-alpha-amino acid + H(+). It catalyses the reaction glycyl-tRNA(Ala) + H2O = tRNA(Ala) + glycine + H(+). Functionally, D-aminoacyl-tRNA deacylase with broad substrate specificity. By recycling D-aminoacyl-tRNA to D-amino acids and free tRNA molecules, this enzyme counteracts the toxicity associated with the formation of D-aminoacyl-tRNA entities in vivo. The sequence is that of D-aminoacyl-tRNA deacylase from Metallosphaera sedula (strain ATCC 51363 / DSM 5348 / JCM 9185 / NBRC 15509 / TH2).